The sequence spans 420 residues: Anaerobic glycerol-3-phosphate dehydrogenase subunit B (420 aa).

It belongs to the anaerobic G-3-P dehydrogenase subunit B family. As to quaternary structure, composed of a catalytic GlpA/B dimer and of membrane bound GlpC. It depends on FMN as a cofactor.

It catalyses the reaction a quinone + sn-glycerol 3-phosphate = dihydroxyacetone phosphate + a quinol. It participates in polyol metabolism; glycerol degradation via glycerol kinase pathway; glycerone phosphate from sn-glycerol 3-phosphate (anaerobic route): step 1/1. Functionally, conversion of glycerol 3-phosphate to dihydroxyacetone. Uses fumarate or nitrate as electron acceptor. The sequence is that of Anaerobic glycerol-3-phosphate dehydrogenase subunit B from Pectobacterium atrosepticum (strain SCRI 1043 / ATCC BAA-672) (Erwinia carotovora subsp. atroseptica).